Consider the following 222-residue polypeptide: Vesicle-associated membrane protein 724 (222 aa).

The Cytoplasmic segment spans residues 1–197; the sequence is MGQESFIYSF…LWYQNMKIKL (197 aa). The region spanning 10–115 is the Longin domain; it reads FVARGTMILA…SLNKEFGPVM (106 aa). Positions 131-191 constitute a v-SNARE coiled-coil homology domain; it reads KLIKVKAQVS…TQVRRKLWYQ (61 aa). Residues 198-218 form a helical; Anchor for type IV membrane protein membrane-spanning segment; it reads VVLGILLLLVLIIWISVCHGF. The Vesicular segment spans residues 219 to 222; it reads NCTD.

This sequence belongs to the synaptobrevin family. Expressed in flowers, leaves, stems and roots.

Its subcellular location is the cell membrane. It localises to the early endosome membrane. In terms of biological role, involved in the targeting and/or fusion of transport vesicles to their target membrane. The sequence is that of Vesicle-associated membrane protein 724 from Arabidopsis thaliana (Mouse-ear cress).